The chain runs to 216 residues: uncharacterized protein (216 aa).

The helical transmembrane segment at 1–21 (MTIVHFVGSLFFFFFFSYIFF) threads the bilayer.

It is found in the membrane. This is an uncharacterized protein from Saccharomyces cerevisiae (strain ATCC 204508 / S288c) (Baker's yeast).